The sequence spans 443 residues: Serine/threonine-protein kinase Nek2 (443 aa).

In terms of domain architecture, Protein kinase spans 8 to 271 (YEVLHSIGTG…VEEILESPLI (264 aa)). ATP contacts are provided by residues 14-22 (IGTGSYGRC) and Lys-37. The active-site Proton acceptor is the Asp-141. Phosphothreonine; by autocatalysis is present on Thr-170. At Ser-171 the chain carries Phosphoserine; by autocatalysis. Phosphothreonine; by autocatalysis is present on residues Thr-175 and Thr-179. Ser-184 carries the phosphoserine modification. Ser-241 carries the phosphoserine; by autocatalysis modification. Residues 264–443 (EILESPLIAD…LKSRQILGMR (180 aa)) form an interaction with PCNT region. The segment covering 282–292 (NLERRGRRSGE) has biased composition (basic and acidic residues). The disordered stretch occupies residues 282 to 303 (NLERRGRRSGEPSKLPDSSPVL). The residue at position 300 (Ser-300) is a Phosphoserine. Residues 301–443 (PVLSELKLKE…LKSRQILGMR (143 aa)) are interaction with CEP85. Residues 303–361 (LSELKLKERQLQDREQALRAREDILEQKERELCIRERLAEDKLARAESLMKNYSLLKEH) adopt a coiled-coil conformation. The interval 306–334 (LKLKERQLQDREQALRAREDILEQKEREL) is leucine-zipper. Positions 329-443 (QKERELCIRE…LKSRQILGMR (115 aa)) are necessary for interaction with MAD1L1. The tract at residues 333–370 (ELCIRERLAEDKLARAESLMKNYSLLKEHRLLCLAGGP) is required for microtubule binding and for localization to the centrosomes. A Phosphoserine; by STK3/MST2 modification is found at Ser-356. The segment at 383–402 (VHFHGESKENTARSENSESY) is disordered. The segment covering 385–398 (FHGESKENTARSEN) has biased composition (basic and acidic residues). Residues Ser-389, Ser-396, and Ser-401 each carry the phosphoserine modification. Residues 402–437 (YLAKSKCRDLKKRLHAAQLRAQALADIEKNYQLKSR) are interaction with SAV1 and STK3/MST2. A coiled-coil region spans residues 403–427 (LAKSKCRDLKKRLHAAQLRAQALAD). Phosphoserine; by STK3/MST2 is present on Ser-436.

It belongs to the protein kinase superfamily. NEK Ser/Thr protein kinase family. NIMA subfamily. Forms homodimers and heterodimers. Interacts with CDC20, CTNB1, MAD1L1, MAD2L1, MAPK, NEK11, NPM1, NDC80, PCNT, PPP1CA, PPP1CC and SGO1. Interacts with STK3/MST2 (via SARAH domain) and SAV1 (via SARAH domain). Interacts with NECAB3 and HMGA2. Interacts with CEP68; the interaction leads to phosphorylation of CEP68. Interacts with CNTLN; the interaction leads to phosphorylation of CNTLN. Interacts with CEP85. It depends on Mg(2+) as a cofactor. In terms of processing, activated by autophosphorylation. Protein phosphatase 1 represses autophosphorylation and activation of isoform 1 by dephosphorylation. Phosphorylation by STK3/MST2 is necessary for its localization to the centrosome. As to expression, most abundantly expressed in testis. Low levels found in mid-gestation embryo, ovary, placenta, intestine, thymus and skin. Within the testis, expression restricted to germ cells with highest levels detected in spermatocytes at pachytene and diplotene stages. Also expressed in meiotic pachytene oocytes.

It localises to the nucleus. Its subcellular location is the nucleolus. The protein resides in the cytoplasm. It is found in the cytoskeleton. The protein localises to the microtubule organizing center. It localises to the centrosome. Its subcellular location is the spindle pole. The protein resides in the chromosome. It is found in the centromere. The protein localises to the kinetochore. It catalyses the reaction L-seryl-[protein] + ATP = O-phospho-L-seryl-[protein] + ADP + H(+). The catalysed reaction is L-threonyl-[protein] + ATP = O-phospho-L-threonyl-[protein] + ADP + H(+). Its activity is regulated as follows. Its catalytic activity is inhibited by the inhibitor CCT241950. In the presence of this inhibitor, displays an autoinhibited conformation: Tyr-70 side chain points into the active site, interacts with the activation loop, and blocks the alphaC helix. In terms of biological role, protein kinase which is involved in the control of centrosome separation and bipolar spindle formation in mitotic cells and chromatin condensation in meiotic cells. Regulates centrosome separation (essential for the formation of bipolar spindles and high-fidelity chromosome separation) by phosphorylating centrosomal proteins such as CROCC, CEP250 and NINL, resulting in their displacement from the centrosomes. Regulates kinetochore microtubule attachment stability in mitosis via phosphorylation of NDC80. Involved in regulation of mitotic checkpoint protein complex via phosphorylation of CDC20 and MAD2L1. Plays an active role in chromatin condensation during the first meiotic division through phosphorylation of HMGA2. Phosphorylates: PPP1CC; SGO1; NECAB3 and NPM1. Essential for localization of MAD2L1 to kinetochore and MAPK1 and NPM1 to the centrosome. Phosphorylates CEP68 and CNTLN directly or indirectly. NEK2-mediated phosphorylation of CEP68 promotes CEP68 dissociation from the centrosome and its degradation at the onset of mitosis. Phosphorylates and activates NEK11 in G1/S-arrested cells. Involved in the regulation of centrosome disjunction. The sequence is that of Serine/threonine-protein kinase Nek2 (Nek2) from Mus musculus (Mouse).